Reading from the N-terminus, the 140-residue chain is uncharacterized protein (140 aa).

The segment at 80-115 is disordered; that stretch reads KNGTRRHALPSPLEGSFQPGRQIPPPQTPSTDPQTL.

This is an uncharacterized protein from Homo sapiens (Human).